The following is a 345-amino-acid chain: Holliday junction branch migration complex subunit RuvB (345 aa).

The tract at residues 4-194 (TDKLFGAAPE…FGIVARLEFY (191 aa)) is large ATPase domain (RuvB-L). Residues leucine 33, arginine 34, glycine 75, lysine 78, threonine 79, threonine 80, 141 to 143 (EDY), arginine 184, tyrosine 194, and arginine 231 each bind ATP. Threonine 79 contacts Mg(2+). The interval 195–265 (NAEELTRIVS…VADAALAMLD (71 aa)) is small ATPAse domain (RuvB-S). A head domain (RuvB-H) region spans residues 268 to 345 (PAGLDVMDRK…LHFGLPVKDA (78 aa)). Positions 323 and 328 each coordinate DNA.

It belongs to the RuvB family. As to quaternary structure, homohexamer. Forms an RuvA(8)-RuvB(12)-Holliday junction (HJ) complex. HJ DNA is sandwiched between 2 RuvA tetramers; dsDNA enters through RuvA and exits via RuvB. An RuvB hexamer assembles on each DNA strand where it exits the tetramer. Each RuvB hexamer is contacted by two RuvA subunits (via domain III) on 2 adjacent RuvB subunits; this complex drives branch migration. In the full resolvosome a probable DNA-RuvA(4)-RuvB(12)-RuvC(2) complex forms which resolves the HJ.

It localises to the cytoplasm. The catalysed reaction is ATP + H2O = ADP + phosphate + H(+). Functionally, the RuvA-RuvB-RuvC complex processes Holliday junction (HJ) DNA during genetic recombination and DNA repair, while the RuvA-RuvB complex plays an important role in the rescue of blocked DNA replication forks via replication fork reversal (RFR). RuvA specifically binds to HJ cruciform DNA, conferring on it an open structure. The RuvB hexamer acts as an ATP-dependent pump, pulling dsDNA into and through the RuvAB complex. RuvB forms 2 homohexamers on either side of HJ DNA bound by 1 or 2 RuvA tetramers; 4 subunits per hexamer contact DNA at a time. Coordinated motions by a converter formed by DNA-disengaged RuvB subunits stimulates ATP hydrolysis and nucleotide exchange. Immobilization of the converter enables RuvB to convert the ATP-contained energy into a lever motion, pulling 2 nucleotides of DNA out of the RuvA tetramer per ATP hydrolyzed, thus driving DNA branch migration. The RuvB motors rotate together with the DNA substrate, which together with the progressing nucleotide cycle form the mechanistic basis for DNA recombination by continuous HJ branch migration. Branch migration allows RuvC to scan DNA until it finds its consensus sequence, where it cleaves and resolves cruciform DNA. This Chromobacterium violaceum (strain ATCC 12472 / DSM 30191 / JCM 1249 / CCUG 213 / NBRC 12614 / NCIMB 9131 / NCTC 9757 / MK) protein is Holliday junction branch migration complex subunit RuvB.